A 149-amino-acid polypeptide reads, in one-letter code: SsrA-binding protein (149 aa).

Residues 123 to 149 (KQFDKRETEKQRDWQREKARIMKGGKE) are disordered.

This sequence belongs to the SmpB family.

Its subcellular location is the cytoplasm. In terms of biological role, required for rescue of stalled ribosomes mediated by trans-translation. Binds to transfer-messenger RNA (tmRNA), required for stable association of tmRNA with ribosomes. tmRNA and SmpB together mimic tRNA shape, replacing the anticodon stem-loop with SmpB. tmRNA is encoded by the ssrA gene; the 2 termini fold to resemble tRNA(Ala) and it encodes a 'tag peptide', a short internal open reading frame. During trans-translation Ala-aminoacylated tmRNA acts like a tRNA, entering the A-site of stalled ribosomes, displacing the stalled mRNA. The ribosome then switches to translate the ORF on the tmRNA; the nascent peptide is terminated with the 'tag peptide' encoded by the tmRNA and targeted for degradation. The ribosome is freed to recommence translation, which seems to be the essential function of trans-translation. The polypeptide is SsrA-binding protein (Cupriavidus taiwanensis (strain DSM 17343 / BCRC 17206 / CCUG 44338 / CIP 107171 / LMG 19424 / R1) (Ralstonia taiwanensis (strain LMG 19424))).